The following is a 540-amino-acid chain: Pentatricopeptide repeat-containing protein At1g14470 (540 aa).

14 PPR repeats span residues 70–104 (NVFV…GIMP), 105–134 (DAFS…GFFK), 135–165 (DPYV…ISQR), 166–196 (KGSD…MPEN), 197–227 (DVVS…MPEK), 228–262 (SVVS…GVRP), 263–297 (NETT…RVRL), 298–328 (NCFV…LGTQ), 330–364 (NLVT…NVVS), 365–395 (WNSL…GDSK), 397–431 (DEVT…QIKL), 432–462 (NDSG…MKER), 463–497 (DVVS…GIEP), and 498–528 (DRVT…IRNP).

The protein belongs to the PPR family. PCMP-A subfamily.

The protein is Pentatricopeptide repeat-containing protein At1g14470 (PCMP-A4) of Arabidopsis thaliana (Mouse-ear cress).